Reading from the N-terminus, the 116-residue chain is Protein Rev (116 aa).

2 positions are modified to phosphoserine; by host CK2: serine 5 and serine 8. The tract at residues 18 to 26 (LIKVLYQSN) is homomultimerization. Positions 23-48 (YQSNPPPSSEGTRQARRNRRRRWRER) are disordered. The Nuclear localization signal and RNA-binding (RRE) signature appears at 34 to 50 (TRQARRNRRRRWRERQR). Residues 36-47 (QARRNRRRRWRE) show a composition bias toward basic residues. Residues 73–84 (FQLPPLERLTLD) carry the Nuclear export signal and binding to XPO1 motif. Residues 90-116 (GTSGTQGVGSPQILVESPPVLDSGTKE) are disordered. Residues serine 92 and serine 99 each carry the phosphoserine; by host modification.

The protein belongs to the HIV-1 REV protein family. Homomultimer; when bound to the RRE. Multimeric assembly is essential for activity and may involve XPO1. Binds to human KPNB1, XPO1, TNPO1, RANBP5 and IPO7. Interacts with the viral Integrase. Interacts with human KHDRBS1. Interacts with human NAP1; this interaction decreases Rev multimerization and stimulates its activity. Interacts with human DEAD-box helicases DDX3 and DDX24; these interactions may serve for viral RNA export to the cytoplasm and packaging, respectively. Interacts with human PSIP1; this interaction may inhibit HIV-1 DNA integration by promoting dissociation of the Integrase-LEDGF/p75 complex. Asymmetrically arginine dimethylated at one site by host PRMT6. Methylation impairs the RNA-binding activity and export of viral RNA from the nucleus to the cytoplasm. Post-translationally, phosphorylated by protein kinase CK2. Presence of, and maybe binding to the N-terminus of the regulatory beta subunit of CK2 is necessary for CK2-mediated Rev's phosphorylation.

The protein localises to the host nucleus. It localises to the host nucleolus. It is found in the host cytoplasm. Functionally, escorts unspliced or incompletely spliced viral pre-mRNAs (late transcripts) out of the nucleus of infected cells. These pre-mRNAs carry a recognition sequence called Rev responsive element (RRE) located in the env gene, that is not present in fully spliced viral mRNAs (early transcripts). This function is essential since most viral proteins are translated from unspliced or partially spliced pre-mRNAs which cannot exit the nucleus by the pathway used by fully processed cellular mRNAs. Rev itself is translated from a fully spliced mRNA that readily exits the nucleus. Rev's nuclear localization signal (NLS) binds directly to KPNB1/Importin beta-1 without previous binding to KPNA1/Importin alpha-1. KPNB1 binds to the GDP bound form of RAN (Ran-GDP) and targets Rev to the nucleus. In the nucleus, the conversion from Ran-GDP to Ran-GTP dissociates Rev from KPNB1 and allows Rev's binding to the RRE in viral pre-mRNAs. Rev multimerization on the RRE via cooperative assembly exposes its nuclear export signal (NES) to the surface. Rev can then form a complex with XPO1/CRM1 and Ran-GTP, leading to nuclear export of the complex. Conversion from Ran-GTP to Ran-GDP mediates dissociation of the Rev/RRE/XPO1/RAN complex, so that Rev can return to the nucleus for a subsequent round of export. Beside KPNB1, also seems to interact with TNPO1/Transportin-1, RANBP5/IPO5 and IPO7/RANBP7 for nuclear import. The nucleoporin-like HRB/RIP is an essential cofactor that probably indirectly interacts with Rev to release HIV RNAs from the perinuclear region to the cytoplasm. This chain is Protein Rev, found in Human immunodeficiency virus type 1 group M subtype B (isolate YU-2) (HIV-1).